We begin with the raw amino-acid sequence, 486 residues long: Corytuberine synthase (486 aa).

Residues 6–21 (ALFSLIPVILVFILLL) form a helical membrane-spanning segment. Cys-428 provides a ligand contact to heme.

This sequence belongs to the cytochrome P450 family. The cofactor is heme.

The protein resides in the endoplasmic reticulum membrane. It carries out the reaction (S)-reticuline + reduced [NADPH--hemoprotein reductase] + O2 = (S)-corytuberine + oxidized [NADPH--hemoprotein reductase] + 2 H2O + 2 H(+). With respect to regulation, inhibited by ketoconazole. Cytochrome P450 that catalyzes an intramolecular C-C phenol coupling of (S)-reticuline in magnoflorine biosynthesis. Catalyzes the formation of (S)-corytuberine from (S)-reticuline, and also, with a lover efficiency, the 4'-O-demethylation of codamine to produce orientaline, and subsequent C-C-phenol coupling of orientaline. Can also use (R,S)-norreticuline, (R,S)-orientaline, (S)-N-methylcoclaurine and (S)-coclaurine as substrates, but not (R,S)-6-O-methyllaudanosoline, (R,S)-6-O-methylnorlaudanosoline, (R,S)-laudanine, (R,S)-norlaudanine, (R,S)-4'-O-methyllaudanosoline, (R,S)-pseudocodamine, (R,S)-norpseudocodamine, (R,S)-laudanosine, (R,S)-norlaudanosine, (R,S)-laudanosoline or (R,S)-norlaudanosoline. This Coptis japonica (Japanese goldthread) protein is Corytuberine synthase.